The primary structure comprises 351 residues: MTEPKLATTHVVGEPTFEGLARFIERNNITKIFVMVGAGISVAAGIPDFRSPHTGLYAKLSRYNLNSPEDAFSLPLLRQQPSVFYNILMDMDLWPGKYCPTTVHHFISLLAKKGMLLCCCTQNIDGLERACGIPESLLVEAHGSFSSASCVDCHAKYDINMARAETRAGKVPHCNQCGGIVKPDVVFFGENLPEAFFNVAGLIEETELLLILGTSLQVHPFADLALMVPSDVPRVLFNLERVGGRMFRFPTDRTPNFRASSYRLSTGNGNGSKISSGDSSNSSSVDGYDQFTLAENDETGVLRDIFFPGDCQVSVRSFAQALGFGEQLDASVREGREIFERTRRREKVVEG.

The region spanning 10 to 325 is the Deacetylase sirtuin-type domain; the sequence is HVVGEPTFEG…RSFAQALGFG (316 aa). NAD(+) contacts are provided by residues 37-57 and 122-125; these read GAGI…TGLY and QNID. The active-site Proton acceptor is His142. Zn(2+) contacts are provided by Cys150, Cys153, Cys174, and Cys177. NAD(+) is bound by residues 213 to 215 and 238 to 240; these read GTS and NLE. The disordered stretch occupies residues 260-284; sequence SSYRLSTGNGNGSKISSGDSSNSSS. Residues 265–284 show a composition bias toward low complexity; that stretch reads STGNGNGSKISSGDSSNSSS. Cys311 contributes to the NAD(+) binding site.

Belongs to the sirtuin family. Class I subfamily. The cofactor is Zn(2+).

It localises to the nucleus. The protein localises to the chromosome. Its subcellular location is the telomere. It carries out the reaction N(6)-acetyl-L-lysyl-[protein] + NAD(+) + H2O = 2''-O-acetyl-ADP-D-ribose + nicotinamide + L-lysyl-[protein]. Its function is as follows. NAD-dependent protein deacetylase, which is involved in repression of RNA polymerase I-mediated expression immediately adjacent to telomeres. It is however not involved in antigenic variation and subtelomeric variant surface glycoprotein (VSG) gene silencing. Plays a role in DNA damage response. Also has ADP-ribosylation activity in vitro. In Trypanosoma brucei brucei (strain 927/4 GUTat10.1), this protein is NAD-dependent protein deacetylase SIR2rp1 (SIR2rp1).